We begin with the raw amino-acid sequence, 568 residues long: Proline--tRNA ligase (568 aa).

This sequence belongs to the class-II aminoacyl-tRNA synthetase family. ProS type 1 subfamily. As to quaternary structure, homodimer.

It localises to the cytoplasm. It catalyses the reaction tRNA(Pro) + L-proline + ATP = L-prolyl-tRNA(Pro) + AMP + diphosphate. Its function is as follows. Catalyzes the attachment of proline to tRNA(Pro) in a two-step reaction: proline is first activated by ATP to form Pro-AMP and then transferred to the acceptor end of tRNA(Pro). As ProRS can inadvertently accommodate and process non-cognate amino acids such as alanine and cysteine, to avoid such errors it has two additional distinct editing activities against alanine. One activity is designated as 'pretransfer' editing and involves the tRNA(Pro)-independent hydrolysis of activated Ala-AMP. The other activity is designated 'posttransfer' editing and involves deacylation of mischarged Ala-tRNA(Pro). The misacylated Cys-tRNA(Pro) is not edited by ProRS. The protein is Proline--tRNA ligase of Aliarcobacter butzleri (strain RM4018) (Arcobacter butzleri).